The primary structure comprises 154 residues: 17 kDa surface antigen (154 aa).

Positions Met1 to Ala19 are cleaved as a signal peptide. Cys20 is lipidated: N-palmitoyl cysteine. Cys20 is lipidated: S-diacylglycerol cysteine.

It belongs to the rickettsiale 17 kDa surface antigen family.

The protein localises to the cell outer membrane. The sequence is that of 17 kDa surface antigen (omp) from Rickettsia montanensis.